The chain runs to 2032 residues: MGDDSEWLKLPVDQKCEHKLWKARLSGYEEALKIFQKIKDEKSPEWSKYLGLIKKFVTDSNAVVQLKGLEAALVYVENAHVAGKTTGEVVSGVVSKVFNQPKAKAKELGIEICLMYVEIEKGESVQEELLKGLDNKNPKIIVACIETLRKALSEFGSKIISLKPIIKVLPKLFESRDKAVRDEAKLFAIEIYRWNRDAVKHTLQNINSVQLKELEEEWVKLPTGAPKPSRFLRSQQELEAKLEQQQSAGGDAEGGGDDGDEVPQVDAYELLDAVEILSKLPKDFYDKIEAKKWQERKEALEAVEVLVKNPKLEAGDYADLVKALKKVVGKDTNVMLVALAAKCLTGLAVGLRKKFGQYAGHVVPTILEKFKEKKPQVVQALQEAIDAIFLTTTLQNISEDVLAVMDNKNPTIKQQTSLFIARSFRHCTSSTLPKSLLKPFCAALLKHINDSAPEVRDAAFEALGTALKVVGEKSVNPFLADVDKLKLDRIKECSEKVELVHGKKSGLATEKKESKPLPGRAAASGAAGDKDTKDVSGPKPGPLKKTPTAKAGGPSKKGKTTAPGGSASAGTKNKKGLETKEIVEPELSIEVCEEKASAVLPPTCIQLLDSSNWKERLACMEEFQKAVELMERTEMPCQALVKMLAKKPGWKETNFQVMQMKLHIVALIAQKGNFSKTSAQIVLDGLVDKIGDVKCGNNAKEAMTAIAEACMLPWTAEQVMSMAFSQKNPKNQSETLNWLSNAIKEFGFSELNVKAFISNVKTALAATNPAVRTSAITLLGVMYLYVGPSLRMIFEDEKPALLSQIDAEFQKMQGQSPPAPTRGIAKHSTSATDEGEDGEEPGEGGNDVVDLLPRIEISDKITSELVSKIGDKNWKIRKEGLDEVAGIINEAKFIQPNIGELPTALKGRLNDSNKILVQQTLNILQQLAVAMGANIRQHVKNLGIPVITVLGDSKNNVRAAALATVNAWAEQTGMKEWLEGEDLSEELKKENPFLRQELLGWLAEKLPTLRSTPTDLILCVPHLYSCLKDRNGDVRKKAQDALPFFMMHLGYEKMAKATGKLKPTSKDQVLAMLEKAKANMPSKPAAPAKAMSKPMGGSAPAKTQPIPAPVEDSVSSTIEAKPDLKKAKAPGVSSKAKSVQGKKVPSKTTLKEDDDKSGPIFIVVPNGKEQRMRDEKGLKVLKWNFTTPRDEYIEQLKTQMSTCVAKWLQDEMFHSDFQHHNKALAVMVDHLESEKDGVISCLDLILKWLTLRFFDTNTSVLMKALEYLKLLFTLLSEEEYHLTENEASSFIPYLILKVGEPKDVIRKDVRAILNRMCLVYPASKMFPFIMEGTKSKNSKQRAECLEELGCLIESYGMNVCQPTPGKALKEIAIHIGDRDNAVRNAALNTIVTVYNVHGDQVFKLIGNLSEKDMSMLEERIKRSAKRPSAAPVKQAEEKPQRTQNINSNANMLRKGPAEDMSSKLNQARSLSGHPEAAQMVRREFQLDLDEIENDNGTVRCEMPELVQHKLDDIFEPVLIPEPKIRAVSPHFDDMHSNTASTINFIISQVASGDINTSIQALTQIDEVLRQEDKAEAMSGHIDQFLIATFMQLRLIYSTHMADEKLDKDEIIKLYSCIIGNMISLFQIESLAREASTGVLKDLMHGLITLMLDSRIEDLEEGQQVIRSVNLLVVKVLEKSDQTNILSALLVLLQDSLLATASSPKFSELVMKCLWRMVRLLPDTINSINLDRILLDIHIFMKVFPKEKLKQCKSEFPIRTLKTLLHTLCKLKGPKILDHLTMIDNKNESELEAHLCRMMKHSMDQTGSKSDKETEKGASRIDEKSSKAKVNDFLAEIFKKIGSKENTKEGLAELYEYKKKYSDTDIEPFLKNSSQFFQSYVERGLRVIEMERESKGRIPTSTGISPQMEVTCVPTPTSTVSSLGNTNGEEVGPSVYLERLKILRQRCGLDNTKQDDRPPLTSLLSKPAIPPVASSTDMLHSKLSQLRESREQHQHSDLDSNQTHSAGTMTSSSSTTNIDDLKKRLERIKSSRK.

TOG regions lie at residues Met1 to Thr223, Tyr268 to Gly502, and Ser588 to Pro817. Lys48 is subject to N6-acetyllysine. HEAT repeat units lie at residues Ile159–Asp197, Gly356–Leu394, and Lys434–Glu472. Residues His501–Thr579 form a disordered region. The stretch at Glu750–Pro788 is one HEAT 4 repeat. A disordered region spans residues Lys811–Val848. Ser816 is subject to Phosphoserine. Over residues Asp833–Gly842 the composition is skewed to acidic residues. TOG regions lie at residues Pro853 to Pro1081 and Ile1193 to Ser1428. 3 HEAT repeats span residues Ile855–Phe893, Arg936–Met974, and Pro1013–Tyr1051. Over residues Ala1078–Met1095 the composition is skewed to low complexity. Residues Ala1078–Lys1156 are disordered. 3 HEAT repeats span residues Glu1284 to Ala1322, Lys1324 to Met1357, and Gln1361 to Asp1399. The interval Ile1420–Asp1459 is disordered. Residues Arg1441–Asn1450 are compositionally biased toward polar residues. Phosphoserine is present on Ser1469. The interval Ser1801–Glu1822 is disordered. The span at Lys1808 to Glu1822 shows a compositional bias: basic and acidic residues. A Phosphoserine modification is found at Ser1861. 2 disordered regions span residues Ser1893–Asn1926 and Leu1948–Lys2032. Low complexity predominate over residues Val1909 to Ser1921. The interval Pro1932 to Pro1957 is interaction with TACC3. Residues Ala1972–Ser1983 are compositionally biased toward polar residues. Residues Gln1984 to Leu1997 show a composition bias toward basic and acidic residues. A compositionally biased stretch (low complexity) spans Thr2002 to Thr2015. The segment covering Asp2018 to Lys2032 has biased composition (basic and acidic residues).

The protein belongs to the TOG/XMAP215 family. As to quaternary structure, interacts with TACC1. Interacts with HNRNPA2B1. Interacts with TACC3 independently of clathrin. Interacts with TACC3 and clathrin forming the TACC3/ch-TOG/clathrin complex located at spindle inter-microtubules bridges. Interacts with NDC80; indicative for an association with the NDC80 complex. Interacts with SLAIN2. Interacts with SLAIN1.

It is found in the cytoplasm. The protein localises to the cytoskeleton. Its subcellular location is the microtubule organizing center. It localises to the centrosome. The protein resides in the spindle pole. It is found in the spindle. The protein localises to the chromosome. Its subcellular location is the centromere. It localises to the kinetochore. Its function is as follows. Binds to the plus end of microtubules and regulates microtubule dynamics and microtubule organization. Acts as a processive microtubule polymerase. Promotes cytoplasmic microtubule nucleation and elongation. Plays a major role in organizing spindle poles. In spindle formation protects kinetochore microtubules from depolymerization by KIF2C and has an essential role in centrosomal microtubule assembly independently of KIF2C activity. Contributes to centrosome integrity. Acts as a component of the TACC3/ch-TOG/clathrin complex proposed to contribute to stabilization of kinetochore fibers of the mitotic spindle by acting as inter-microtubule bridge. The TACC3/ch-TOG/clathrin complex is required for the maintenance of kinetochore fiber tension. Enhances the strength of NDC80 complex-mediated kinetochore-tip microtubule attachments. In Mus musculus (Mouse), this protein is Cytoskeleton-associated protein 5.